We begin with the raw amino-acid sequence, 456 residues long: MICGSKKKAYLKSQNLKILGQGKLNGIVKINGAKNSALVLLASSLLTNEKIILENIPYLTDIEKMGNILKNLGVNLIDKNDQLEIDPTNISIKELPYELVNGLRASFFCIGALLTKFGEAQVPLPGGCNIGSRPIDEHINGLIALGADIIIEEGIVKAKIRGNKNKLHGTHIKLKCPSVGATETLIMAASLAEGRTTIENAAREPEIQDLCHMLNKMGAKIYDSGKETIIIDGVNKLGGCTHKVIPDRIEAGTFLIAAAATSSSITISPVIPHHLEAVTNKLQESGSKITIKGNSISIKSKEIKGVDIETAPFPGFPTDLQAPFTALMTIANGESKITETIFENRMNHIHLLNKMGARIKLNENVAYIKGVKTLNGMDLIGSDLRSSAALIIAGIIAEGTSNIYGLEHLDRGYENFELKLKKLGIKITREFNKSTFEENEFKIEPKSEDISNLRAA.

A phosphoenolpyruvate-binding site is contributed by 34–35; it reads KN. Position 104 (arginine 104) interacts with UDP-N-acetyl-alpha-D-glucosamine. Cysteine 128 (proton donor) is an active-site residue. Cysteine 128 is subject to 2-(S-cysteinyl)pyruvic acid O-phosphothioketal. 2 residues coordinate UDP-N-acetyl-alpha-D-glucosamine: aspartate 319 and isoleucine 341.

Belongs to the EPSP synthase family. MurA subfamily.

It is found in the cytoplasm. The enzyme catalyses phosphoenolpyruvate + UDP-N-acetyl-alpha-D-glucosamine = UDP-N-acetyl-3-O-(1-carboxyvinyl)-alpha-D-glucosamine + phosphate. It functions in the pathway cell wall biogenesis; peptidoglycan biosynthesis. In terms of biological role, cell wall formation. Adds enolpyruvyl to UDP-N-acetylglucosamine. This Prochlorococcus marinus (strain MIT 9312) protein is UDP-N-acetylglucosamine 1-carboxyvinyltransferase.